We begin with the raw amino-acid sequence, 107 residues long: High mobility group protein HMG-I/HMG-Y (107 aa).

Residues 1 to 13 (MSESGSKSSQPLA) show a composition bias toward polar residues. A disordered region spans residues 1–107 (MSESGSKSSQ…ISQESSEEEQ (107 aa)). At Ser2 the chain carries N-acetylserine. Lys7 bears the N6-acetyllysine mark. Ser8 bears the ADP-ribosylserine mark. Ser9 carries the post-translational modification ADP-ribosylserine; alternate. The residue at position 9 (Ser9) is a Phosphoserine; alternate. Lys15 carries the N6-acetyllysine; alternate modification. Lys15 is covalently cross-linked (Glycyl lysine isopeptide (Lys-Gly) (interchain with G-Cter in SUMO2); alternate). Residues 15–24 (KQEKDGTEKR) show a composition bias toward basic and acidic residues. A DNA-binding region (a.T hook 1) is located at residues 21-31 (TEKRGRGRPRK). Position 26 is an asymmetric dimethylarginine; alternate (Arg26). At Arg26 the chain carries Omega-N-methylarginine; alternate. The residue at position 26 (Arg26) is a Symmetric dimethylarginine; alternate. Position 36 is a phosphoserine; by HIPK2 and CDC2 (Ser36). Thr39 is subject to Phosphothreonine. 2 positions are modified to phosphoserine: Ser44 and Ser49. Thr53 is modified (phosphothreonine; by HIPK2 and CDC2). 2 DNA-binding regions (a.T hook) span residues 53–63 (TPKRPRGRPKG) and 78–89 (APGRKPRGRPKK). Residues 53–77 (TPKRPRGRPKGSKNKGAAKTRKVTT) form an interaction with HIPK2 region. Positions 55–74 (KRPRGRPKGSKNKGAAKTRK) are enriched in basic residues. An asymmetric dimethylarginine; by PRMT6; alternate mark is found at Arg58 and Arg60. Omega-N-methylarginine; by PRMT6; alternate occurs at positions 58 and 60. Residues 93 to 107 (EEEEGISQESSEEEQ) are compositionally biased toward acidic residues. Ser99, Ser102, and Ser103 each carry phosphoserine.

This sequence belongs to the HMGA family. In terms of assembly, interacts with HIPK2. Isoforms HMG-I and HMG-Y can be phosphorylated by HIPK2. Phosphorylation may modulate DNA-binding affinity. In terms of processing, methylation at Arg-58 is mutually exclusive with methylation at Arg-60.

The protein resides in the nucleus. It is found in the chromosome. Functionally, HMG-I/Y bind preferentially to the minor groove of A+T rich regions in double-stranded DNA. It is suggested that these proteins could function in nucleosome phasing and in the 3'-end processing of mRNA transcripts. They are also involved in the transcription regulation of genes containing, or in close proximity to A+T-rich regions. This chain is High mobility group protein HMG-I/HMG-Y (Hmga1), found in Mus musculus (Mouse).